The following is a 549-amino-acid chain: Probable protein kinase UbiB (549 aa).

The Protein kinase domain occupies 123–501 (DFEDTPLASA…QQKAHKSNYL (379 aa)). Residues 129–137 (LASASISQV) and Lys-152 contribute to the ATP site. Asp-287 serves as the catalytic Proton acceptor. Transmembrane regions (helical) follow at residues 498-518 (SNYLLITSAILVICGTILLNQ) and 520-540 (ATLWASYGSIGTGLILWVLGW).

The protein belongs to the ABC1 family. UbiB subfamily.

The protein resides in the cell inner membrane. It functions in the pathway cofactor biosynthesis; ubiquinone biosynthesis [regulation]. Is probably a protein kinase regulator of UbiI activity which is involved in aerobic coenzyme Q (ubiquinone) biosynthesis. In Shewanella piezotolerans (strain WP3 / JCM 13877), this protein is Probable protein kinase UbiB.